The chain runs to 1103 residues: Retinal guanylyl cyclase 2 (1103 aa).

The first 46 residues, 1 to 46 (MFLAPWPFSHLMLWFVTLGRQRGQHGLASFKLLWCLWLLVLMSLPL), serve as a signal peptide directing secretion. Residues 47 to 465 (QVWAPPYKIG…DGRICQGGIN (419 aa)) lie on the Extracellular side of the membrane. A disulfide bond links Cys-104 and Cys-132. A helical membrane pass occupies residues 466 to 490 (PTFALMVCLALLIALLSINGFAYFI). The Cytoplasmic segment spans residues 491–1103 (RHRINKIQLI…FQRRKQKSSW (613 aa)). The 281-residue stretch at 532 to 812 (FQITSEVQSG…DEIFNQFKTF (281 aa)) folds into the Protein kinase domain. Residues 884–1014 (TLYFSDIVGF…DTVNTASRME (131 aa)) enclose the Guanylate cyclase domain.

It belongs to the adenylyl cyclase class-4/guanylyl cyclase family. In terms of assembly, homodimer. Interacts with RD3; promotes the exit of GUCY2F from the endoplasmic reticulum and its trafficking to the photoreceptor outer segments. Post-translationally, there are 9 conserved cysteine residues in sensory guanylate cyclases, 6 in the extracellular domain, which may be involved in intra- or interchain disulfide bonds. In terms of tissue distribution, expressed specifically in retina.

It localises to the membrane. It is found in the photoreceptor outer segment membrane. The enzyme catalyses GTP = 3',5'-cyclic GMP + diphosphate. Activated by GUCA1B when free calcium ions concentration is low, and inhibited by GUCA1B when free calcium ions concentration is high. Inhibited by RD3. In terms of biological role, responsible for the synthesis of cyclic GMP (cGMP) in rods and cones of photoreceptors. Plays an essential role in phototransduction, by mediating cGMP replenishment. May also participate in the trafficking of membrane-asociated proteins to the photoreceptor outer segment membrane. The chain is Retinal guanylyl cyclase 2 (GUCY2F) from Bos taurus (Bovine).